The chain runs to 425 residues: SWI5-dependent HO expression protein 3 (425 aa).

The interval 24 to 45 is disordered; it reads NLESSPTKDRNTSSQNASSSRV. The span at 35–45 shows a compositional bias: polar residues; it reads TSSQNASSSRV. Residues 68–197 are a coiled coil; the sequence is QNLLSKLELA…LELSNQNLNY (130 aa). The tract at residues 322 to 425 is disordered; it reads RKTPNTNDSS…NSMVVHGAQS (104 aa). A compositionally biased stretch (low complexity) spans 326–338; that stretch reads NTNDSSSNGNSSN. Phosphoserine is present on Ser-343. 2 stretches are compositionally biased toward polar residues: residues 345–358 and 382–397; these read YTAS…SIPK and KTNV…SPTI. Ser-394 carries the post-translational modification Phosphoserine.

The protein belongs to the SHE3 family. As to quaternary structure, interacts with SHE2 and MYO4.

The protein localises to the endoplasmic reticulum membrane. Its function is as follows. RNA-binding protein that binds specific mRNAs including the ASH1 mRNA, coding for a repressor of the HO endonuclease. Part of the mRNA localization machinery that restricts accumulation of certain proteins to the bud and in the daughter cell. Required for the delivery of cortical endoplasmic reticulum into the emerging bud. The polypeptide is SWI5-dependent HO expression protein 3 (SHE3) (Saccharomyces cerevisiae (strain ATCC 204508 / S288c) (Baker's yeast)).